The sequence spans 153 residues: Fucose mutarotase (153 aa).

H24 functions as the Proton donor in the catalytic mechanism. Residue D32 coordinates substrate. Residue D69 is part of the active site. Residues M78, Y119, Y137, and N139 each contribute to the substrate site. Residue Y119 is part of the active site.

This sequence belongs to the RbsD / FucU family.

The enzyme catalyses alpha-L-fucose = beta-L-fucose. Functionally, involved in the interconversion between alpha- and beta-L-fucoses. The polypeptide is Fucose mutarotase (fuom) (Danio rerio (Zebrafish)).